A 287-amino-acid polypeptide reads, in one-letter code: MKRIFLLIVTNLAVLLVASIVMSILGVNTSTMGGLLVFAAIFGFGGAFISLAISKWMAKKTMGCEVITTPRDSTERWLLDTVARQAQQAGIKMPEVAIYQSPEMNAFATGPSKDNSLVAVSTGLLYGMSQDEIEGVLAHEVSHVANGDMVTLTLIQGVVNTFVIFAARVVAGIINNFVSSNDEEGEGLGMFAYMAVVFVLDMLFGILASIIVAYFSRIREYRADEGAARLAGKNKMIAALERLRQGPESSAMPAQMSAFGINGKRSMAELMMSHPPLEKRIAALQSR.

Transmembrane regions (helical) follow at residues 4–24 and 33–53; these read IFLL…VMSI and GGLL…SLAI. H139 is a binding site for Zn(2+). Residue E140 is part of the active site. H143 provides a ligand contact to Zn(2+). The next 2 membrane-spanning stretches (helical) occupy residues 154 to 174 and 195 to 215; these read LIQG…AGII and AVVF…VAYF. E220 lines the Zn(2+) pocket.

The protein belongs to the peptidase M48B family. Requires Zn(2+) as cofactor.

It is found in the cell inner membrane. This is Protease HtpX from Shewanella oneidensis (strain ATCC 700550 / JCM 31522 / CIP 106686 / LMG 19005 / NCIMB 14063 / MR-1).